The sequence spans 447 residues: Chitobiosyldiphosphodolichol beta-mannosyltransferase (447 aa).

Residues Met-1–Thr-2 are Cytoplasmic-facing. A helical; Signal-anchor for type II membrane protein membrane pass occupies residues Leu-3–Leu-23. The Lumenal segment spans residues Pro-24–Thr-447.

This sequence belongs to the glycosyltransferase group 1 family. Glycosyltransferase 33 subfamily.

It is found in the endoplasmic reticulum membrane. It carries out the reaction an N,N'-diacetylchitobiosyl-diphospho-di-trans,poly-cis-dolichol + GDP-alpha-D-mannose = a beta-D-Man-(1-&gt;4)-beta-D-GlcNAc-(1-&gt;4)-alpha-D-GlcNAc-diphospho-di-trans,poly-cis-dolichol + GDP + H(+). The protein operates within protein modification; protein glycosylation. Participates in the formation of the lipid-linked precursor oligosaccharide for N-glycosylation. Involved in assembling the dolichol-pyrophosphate-GlcNAc(2)-Man(5) intermediate on the cytoplasmic surface of the ER. The polypeptide is Chitobiosyldiphosphodolichol beta-mannosyltransferase (Arthroderma benhamiae (strain ATCC MYA-4681 / CBS 112371) (Trichophyton mentagrophytes)).